The chain runs to 569 residues: Zinc finger and BTB domain-containing protein 7A (569 aa).

A BTB domain is found at 34–101 (CDVVILVEGR…AYTATLTVST (68 aa)). Positions 214–304 (YGPGPPADRP…LSGAAEGEDG (91 aa)) are disordered. The interval 275 to 569 (EEEAAALSEA…VATAEGNFAT (295 aa)) is mediates interaction with KHDRBS1. Residues 279–288 (AALSEAAPEP) show a composition bias toward low complexity. Phosphoserine occurs at positions 331 and 335. Residues 343-569 (MDYYLKYFSG…VATAEGNFAT (227 aa)) are mediates interaction with RELA. The segment at 371–569 (RAKAFQKCPI…VATAEGNFAT (199 aa)) is mediates interaction with SMAD4. 2 C2H2-type zinc fingers span residues 376 to 398 (QKCP…IRTH) and 404 to 426 (YECN…MRKH). Lysine 430 participates in a covalent cross-link: Glycyl lysine isopeptide (Lys-Gly) (interchain with G-Cter in SUMO2). A C2H2-type 3 zinc finger spans residues 432 to 454 (YLCQQCGAAFAHNYDLKNHMRVH). The segment at 460–484 (YQCDSCCKTFVRSDHLHRHLKKDGC) adopts a C2H2-type 4; atypical zinc-finger fold. Positions 480–569 (KKDGCNGVPS…VATAEGNFAT (90 aa)) are disordered. The span at 498–519 (RGVPPDVPAGAGAPPGLPDAPR) shows a compositional bias: low complexity. Lysine 527 is covalently cross-linked (Glycyl lysine isopeptide (Lys-Gly) (interchain with G-Cter in SUMO2)). Serine 537 carries the phosphoserine modification. A compositionally biased stretch (gly residues) spans 548–557 (GSGGDDGAGG).

Homodimer. Interacts with BCL6. Interacts with RELA; involved in the control by RELA of the accessibility of target gene promoters. Interacts with AR (via NR LBD domain); the interaction is direct and androgen-dependent. Interacts with NCOR1. Interacts with NCOR2. Interacts with SMAD4; the interaction is direct and stimulated by TGFB1. Interacts with HDAC1. Interacts with SP1; ZBTB7A prevents the binding to GC-rich motifs in promoters and represses the transcriptional activity of SP1. Interacts with the DNA-dependent protein kinase complex/DNA-PKc. Interacts with KHDRBS1; negatively regulates KHDRBS1 splicing activity. Sumoylated. Undergoes sumoylation with SUMO1 that may regulate its transcriptional activity. As to expression, widely expressed. In normal thymus, expressed in medullary epithelial cells and Hassle's corpuscles (at protein level). In the spleen, mainly expressed in the white pulp germinal centers (at protein level). Up-regulated in thymic lymphomas.

The protein localises to the nucleus. In terms of biological role, transcription factor that represses the transcription of a wide range of genes involved in cell proliferation and differentiation. Directly and specifically binds to the consensus sequence 5'-[GA][CA]GACCCCCCCCC-3' and represses transcription both by regulating the organization of chromatin and through the direct recruitment of transcription factors to gene regulatory regions. Negatively regulates SMAD4 transcriptional activity in the TGF-beta signaling pathway through these two mechanisms. That is, recruits the chromatin regulator HDAC1 to the SMAD4-DNA complex and in parallel prevents the recruitment of the transcriptional activators CREBBP and EP300. Collaborates with transcription factors like RELA to modify the accessibility of gene transcription regulatory regions to secondary transcription factors. Also directly interacts with transcription factors like SP1 to prevent their binding to DNA. Functions as an androgen receptor/AR transcriptional corepressor by recruiting NCOR1 and NCOR2 to the androgen response elements/ARE on target genes. Thereby, negatively regulates androgen receptor signaling and androgen-induced cell proliferation. Involved in the switch between fetal and adult globin expression during erythroid cells maturation. Through its interaction with the NuRD complex regulates chromatin at the fetal globin genes to repress their transcription. Specifically represses the transcription of the tumor suppressor ARF isoform from the CDKN2A gene. Efficiently abrogates E2F1-dependent CDKN2A transactivation. Regulates chondrogenesis through the transcriptional repression of specific genes via a mechanism that also requires histone deacetylation. Regulates cell proliferation through the transcriptional regulation of genes involved in glycolysis. Involved in adipogenesis through the regulation of genes involved in adipocyte differentiation. Plays a key role in the differentiation of lymphoid progenitors into B and T lineages. Promotes differentiation towards the B lineage by inhibiting the T-cell instructive Notch signaling pathway through the specific transcriptional repression of Notch downstream target genes. Also regulates osteoclast differentiation. May also play a role, independently of its transcriptional activity, in double-strand break repair via classical non-homologous end joining/cNHEJ. Recruited to double-strand break sites on damage DNA, interacts with the DNA-dependent protein kinase complex and directly regulates its stability and activity in DNA repair. May also modulate the splicing activity of KHDRBS1 toward BCL2L1 in a mechanism which is histone deacetylase-dependent and thereby negatively regulates the pro-apoptotic effect of KHDRBS1. The sequence is that of Zinc finger and BTB domain-containing protein 7A from Mus musculus (Mouse).